The following is a 426-amino-acid chain: Glutamate-1-semialdehyde 2,1-aminomutase (426 aa).

An N6-(pyridoxal phosphate)lysine modification is found at lysine 265.

Belongs to the class-III pyridoxal-phosphate-dependent aminotransferase family. HemL subfamily. In terms of assembly, homodimer. It depends on pyridoxal 5'-phosphate as a cofactor.

It localises to the cytoplasm. It carries out the reaction (S)-4-amino-5-oxopentanoate = 5-aminolevulinate. It participates in porphyrin-containing compound metabolism; protoporphyrin-IX biosynthesis; 5-aminolevulinate from L-glutamyl-tRNA(Glu): step 2/2. The sequence is that of Glutamate-1-semialdehyde 2,1-aminomutase from Escherichia coli O7:K1 (strain IAI39 / ExPEC).